Consider the following 763-residue polypeptide: Phospholipid phosphatase-related protein type 4 (763 aa).

A disordered region spans residues 33 to 54 (VHTSPGGGRRPGQAAGMSAKER). Residue S36 is modified to Phosphoserine. 3 helical membrane passes run 67–87 (LPCF…SLYF), 119–139 (AIPF…TIMV), and 178–198 (FVGV…IIQL). 2 N-linked (GlcNAc...) asparagine glycosylation sites follow: N214 and N219. The chain crosses the membrane as a helical span at residues 247 to 267 (SFPSQHATLAAFAAVYVSMYF). The N-linked (GlcNAc...) asparagine glycan is linked to N268. 2 helical membrane-spanning segments follow: residues 276–296 (KLLK…CGLT) and 308–328 (VYCG…YAVG). A Phosphoserine modification is found at S346. The N-linked (GlcNAc...) asparagine glycan is linked to N362. At S385 the chain carries Phosphoserine. N432 carries an N-linked (GlcNAc...) asparagine glycan. The residue at position 438 (S438) is a Phosphoserine. N-linked (GlcNAc...) asparagine glycosylation occurs at N455. Residues 458–529 (RKLSLQVIEP…PRVSIQSRPG (72 aa)) are disordered. Phosphoserine occurs at positions 461 and 472. N-linked (GlcNAc...) asparagine glycans are attached at residues N513, N543, and N568. S606 is subject to Phosphoserine. Basic and acidic residues predominate over residues 669–694 (DSESCESLKDSFGSGDRKRSNIDSNE). Disordered stretches follow at residues 669–698 (DSES…HHHH) and 739–763 (ERSN…AYKD). The span at 740 to 749 (RSNSPENTRN) shows a compositional bias: polar residues.

It belongs to the PA-phosphatase related phosphoesterase family. In terms of processing, O-glycosylated. Probably at Ser-346. As to expression, expressed by glutamatergic neurons (at protein level).

The protein resides in the postsynaptic density membrane. Functionally, postsynaptic density membrane protein that indirectly regulates glutamatergic synaptic transmission through lysophosphatidic acid (LPA)-mediated signaling pathways. Binds lysophosphatidic acid (LPA) and mediates its internalization into cells. Could act as receptor or a transporter of this lipid at the post-synaptic membrane. Modulates lysophosphatidic acid (LPA) activity in neuron axonal outgrowth during development by attenuating phospholipid-induced axon collapse. The polypeptide is Phospholipid phosphatase-related protein type 4 (Homo sapiens (Human)).